We begin with the raw amino-acid sequence, 85 residues long: Translation initiation factor IF-1 (85 aa).

In terms of domain architecture, S1-like spans 1-72; sequence MAKEELIEMH…SKGRITFRHI (72 aa).

Belongs to the IF-1 family. In terms of assembly, component of the 30S ribosomal translation pre-initiation complex which assembles on the 30S ribosome in the order IF-2 and IF-3, IF-1 and N-formylmethionyl-tRNA(fMet); mRNA recruitment can occur at any time during PIC assembly.

The protein resides in the cytoplasm. Functionally, one of the essential components for the initiation of protein synthesis. Stabilizes the binding of IF-2 and IF-3 on the 30S subunit to which N-formylmethionyl-tRNA(fMet) subsequently binds. Helps modulate mRNA selection, yielding the 30S pre-initiation complex (PIC). Upon addition of the 50S ribosomal subunit IF-1, IF-2 and IF-3 are released leaving the mature 70S translation initiation complex. This chain is Translation initiation factor IF-1, found in Polaromonas naphthalenivorans (strain CJ2).